Consider the following 805-residue polypeptide: Hypoxia-inducible factor 1-alpha (805 aa).

Positions 1–26 (MEGSVVVSEKKRISSERRKEKSRDAA) are disordered. Over residues 8 to 26 (SEKKRISSERRKEKSRDAA) the composition is skewed to basic and acidic residues. Residues 17-70 (RRKEKSRDAARCRRSNESEVFYELSHELPLPHNVSSHLDKASIMRLDHQLPAVE) form the bHLH domain. PAS domains are found at residues 85–157 (DKQL…PAKK) and 229–300 (PHPS…TKGQ). The PAC domain occupies 303-346 (TGQYRMLAKKGGYVWVETQATVIYNSKNSQPQCIVCVNYVLSEV). Pro404 and Pro560 each carry 4-hydroxyproline. The disordered stretch occupies residues 628-669 (KESTSAPVSPYNGNRSRTSSPVRPAKAVVDKTEKSRPGTPNL). The span at 629–648 (ESTSAPVSPYNGNRSRTSSP) shows a compositional bias: polar residues. Position 782 is a (3S)-3-hydroxyasparagine (Asn782).

As to quaternary structure, efficient DNA binding requires heterodimerization of an alpha and a beta/ARNT subunit. Post-translationally, in normoxia, is hydroxylated on Pro-404 and Pro-560. The hydroxylated prolines promote interaction with VHL, initiating rapid ubiquitination and subsequent proteasomal degradation. Under hypoxia, proline hydroxylation is impaired and ubiquitination is attenuated, resulting in stabilization. In normoxia, is hydroxylated on Asn-782, thus abrogating interaction with CREBBP and EP300 and preventing transcriptional activation. In terms of processing, the iron and 2-oxoglutarate dependent 3-hydroxylation of asparagine is (S) stereospecific within HIF CTAD domains.

Its subcellular location is the cytoplasm. The protein resides in the nucleus. The protein localises to the nucleus speckle. With respect to regulation, induced by reactive oxygen species (ROS). Its function is as follows. Functions as a master transcriptional regulator of the adaptive response to hypoxia. Under hypoxic conditions, activates the transcription of over 40 genes, including erythropoietin, glucose transporters, glycolytic enzymes, vascular endothelial growth factor, HILPDA, and other genes whose protein products increase oxygen delivery or facilitate metabolic adaptation to hypoxia. Plays an essential role in embryonic vascularization, tumor angiogenesis and pathophysiology of ischemic disease. The polypeptide is Hypoxia-inducible factor 1-alpha (hif1a) (Xenopus laevis (African clawed frog)).